Consider the following 454-residue polypeptide: GTPase Der (454 aa).

2 EngA-type G domains span residues Ala4–Lys167 and Leu188–Gln363. GTP is bound by residues Gly10–Ser17, Asp56–Leu60, Asn121–Glu124, Gly194–Ser201, Asp241–Val245, and Asn306–Asp309. Residues Lys364–Lys450 form the KH-like domain.

The protein belongs to the TRAFAC class TrmE-Era-EngA-EngB-Septin-like GTPase superfamily. EngA (Der) GTPase family. As to quaternary structure, associates with the 50S ribosomal subunit.

Its function is as follows. GTPase that plays an essential role in the late steps of ribosome biogenesis. In Orientia tsutsugamushi (strain Boryong) (Rickettsia tsutsugamushi), this protein is GTPase Der.